A 1278-amino-acid chain; its full sequence is NPC intracellular cholesterol transporter 1 (1278 aa).

Residues 1–22 (MTARGLALGLLLLLLCPAQVFS) form the signal peptide. Residues 23-261 (QSCVWYGECG…QPPPPPAPWT (239 aa)) are Lumenal-facing. 9 disulfide bridges follow: Cys-25–Cys-74, Cys-31–Cys-42, Cys-63–Cys-109, Cys-75–Cys-113, Cys-97–Cys-238, Cys-100–Cys-160, Cys-177–Cys-184, Cys-227–Cys-243, and Cys-240–Cys-247. Asn-41 is a cholesterol binding site. Asn-70 carries an N-linked (GlcNAc...) asparagine glycan. Cholesterol is bound at residue Gln-79. N-linked (GlcNAc...) asparagine glycosylation is found at Asn-122 and Asn-135. Asn-158 carries N-linked (GlcNAc...) asparagine; atypical glycosylation. The important for cholesterol binding and cholesterol transfer from NPC1 to liposomes stretch occupies residues 175 to 205 (LLCGKDADACNATNWIEYMFNKDNGQAPFTI). 2 N-linked (GlcNAc...) asparagine glycosylation sites follow: Asn-185 and Asn-222. The chain crosses the membrane as a helical span at residues 262-282 (ILGLDAMYVIMWITYMAFLLV). At 283–350 (FFGAFFAVWC…RWGSFCVRNP (68 aa)) the chain is on the cytoplasmic side. Residues 351-371 (GCVIFFSLVFITACSSGLVFV) form a helical membrane-spanning segment. Over 372–620 (RVTTNPVDLW…DELNRESDSD (249 aa)) the chain is Lumenal. 7 N-linked (GlcNAc...) asparagine glycosylation sites follow: Asn-452, Asn-459, Asn-478, Asn-524, Asn-557, Asn-572, and Asn-598. 2 cysteine pairs are disulfide-bonded: Cys-468–Cys-479 and Cys-516–Cys-533. One can recognise an SSD domain in the interval 620 to 785 (DVFTVVISYA…ITCFVSLLGL (166 aa)). Residues 621 to 641 (VFTVVISYAIMFLYISLALGH) form a helical membrane-spanning segment. At 642 to 653 (MKSCRRLLVDSK) the chain is on the cytoplasmic side. Residues 654–675 (VSLGIAGILIVLSSVACSLGVF) traverse the membrane as a helical segment. Over 676–685 (SYIGLPLTLI) the chain is Lumenal. The chain crosses the membrane as a helical span at residues 686 to 706 (VIEVIPFLVLAVGVDNIFILV). Over 707-730 (QAYQRDERLQGETLDQQLGRVLGE) the chain is Cytoplasmic. The chain crosses the membrane as a helical span at residues 731-751 (VAPSMFLSSFSETVAFFLGAL). Topologically, residues 752 to 759 (SVMPAVHT) are lumenal. A helical membrane pass occupies residues 760–783 (FSLFAGLAVFIDFLLQITCFVSLL). At 784-832 (GLDIKRQEKNRLDIFCCVRGAEDGTSVQASESCLFRFFKNSYSPLLLKD) the chain is on the cytoplasmic side. A helical membrane pass occupies residues 833–853 (WMRPIVIAIFVGVLSFSIAVL). The Lumenal portion of the chain corresponds to 854 to 1097 (NKVDIGLDQS…YEQYLTIIDD (244 aa)). A disulfide bridge links Cys-909 with Cys-914. 6 N-linked (GlcNAc...) asparagine glycosylation sites follow: Asn-916, Asn-931, Asn-961, Asn-968, Asn-1064, and Asn-1072. Cystine bridges form between Cys-956-Cys-1011, Cys-957-Cys-979, and Cys-967-Cys-976. A helical membrane pass occupies residues 1098 to 1118 (TIFNLGVSLGAIFLVTMVLLG). Topologically, residues 1119 to 1124 (CELWSA) are cytoplasmic. The chain crosses the membrane as a helical span at residues 1125 to 1145 (VIMCATIAMVLVNMFGVMWLW). Residues 1146 to 1150 (GISLN) are Lumenal-facing. Residues 1151-1171 (AVSLVNLVMSCGISVEFCSHI) traverse the membrane as a helical segment. Over 1172-1194 (TRAFTVSMKGSRVERAEEALAHM) the chain is Cytoplasmic. The chain crosses the membrane as a helical span at residues 1195-1215 (GSSVFSGITLTKFGGIVVLAF). Over 1216–1223 (AKSQIFQI) the chain is Lumenal. Residues 1224–1244 (FYFRMYLAMVLLGATHGLIFL) form a helical membrane-spanning segment. Over 1245–1278 (PVLLSYIGPSVNKAKSCATEERYKGTERERLLNF) the chain is Cytoplasmic. A required for location in lysosomes region spans residues 1275-1278 (LLNF). The short motif at 1275–1278 (LLNF) is the Di-leucine motif element.

It belongs to the patched family. As to quaternary structure, interacts (via the second lumenal domain) with NPC2. Interacts with TMEM97; the interaction may decrease NPC1 availability to the cell. Interacts with TIM1. Interacts with SLC38A9; this interaction inhibits cholesterol-mediated mTORC1 activation via its sterol transport activity. In terms of assembly, (Microbial infection) Interacts with ebolavirus glycoprotein. Post-translationally, N-glycosylated.

Its subcellular location is the late endosome membrane. It localises to the lysosome membrane. The catalysed reaction is cholesterol(in) = cholesterol(out). Its function is as follows. Intracellular cholesterol transporter which acts in concert with NPC2 and plays an important role in the egress of cholesterol from the endosomal/lysosomal compartment. Unesterified cholesterol that has been released from LDLs in the lumen of the late endosomes/lysosomes is transferred by NPC2 to the cholesterol-binding pocket in the N-terminal domain of NPC1. Cholesterol binds to NPC1 with the hydroxyl group buried in the binding pocket. Binds oxysterol with higher affinity than cholesterol. May play a role in vesicular trafficking in glia, a process that may be crucial for maintaining the structural and functional integrity of nerve terminals. Inhibits cholesterol-mediated mTORC1 activation throught its interaction with SLC38A9. In terms of biological role, (Microbial infection) Acts as an endosomal entry receptor for ebolavirus. The sequence is that of NPC intracellular cholesterol transporter 1 from Homo sapiens (Human).